Consider the following 360-residue polypeptide: Protein MGF 360-1L (360 aa).

It belongs to the asfivirus MGF 360 family.

Functionally, plays a role in virus cell tropism, and may be required for efficient virus replication in macrophages. The sequence is that of Protein MGF 360-1L from African swine fever virus (strain Badajoz 1971 Vero-adapted) (Ba71V).